Consider the following 96-residue polypeptide: Ribonuclease P protein component 1 (96 aa).

The protein belongs to the eukaryotic/archaeal RNase P protein component 1 family. In terms of assembly, consists of a catalytic RNA component and at least 4-5 protein subunits.

It localises to the cytoplasm. The enzyme catalyses Endonucleolytic cleavage of RNA, removing 5'-extranucleotides from tRNA precursor.. In terms of biological role, part of ribonuclease P, a protein complex that generates mature tRNA molecules by cleaving their 5'-ends. This is Ribonuclease P protein component 1 from Methanococcus aeolicus (strain ATCC BAA-1280 / DSM 17508 / OCM 812 / Nankai-3).